The sequence spans 417 residues: Snake venom metalloproteinase kistomin (417 aa).

Residues Met-1 to Ser-20 form the signal peptide. Positions Ile-21–Pro-189 are excised as a propeptide. The 195-residue stretch at Ala-197–Pro-391 folds into the Peptidase M12B domain. 3 disulfides stabilise this stretch: Cys-308/Cys-386, Cys-348/Cys-370, and Cys-350/Cys-353. His-333 is a Zn(2+) binding site. Residue Glu-334 is part of the active site. His-337 and His-343 together coordinate Zn(2+). The propeptide occupies Leu-392–Ala-417.

It belongs to the venom metalloproteinase (M12B) family. P-I subfamily. In terms of assembly, monomer. The cofactor is Zn(2+). As to expression, expressed by the venom gland.

The protein resides in the secreted. With respect to regulation, inhibited by EDTA, and O-phenanthrolene. Snake venom zinc metalloprotease that inhibits platelet aggregation by binding specifically to platelet glycoprotein VI (GP6) and platelet glycoprotein Ib alpha (GP1BA). It inhibits the interaction between collagen and platelet GP6 by cleaving GP6 (at '225-Glu-|-Ala-226' and '238-Val-|-Phe-239' bonds), and inhibits vWF-induced platelet aggregation by cleaving GP1BA and vWF. Cleavage of GP1BA occurs at two distinct sites to generate two soluble fragments. It also cleaves alpha- (FGA) and subsequently the gamma-chain (FGG) of fibrinogen, leaving the beta-chain unaffected. It also inhibits collagen-, convulxin- and ristocetin-induced platelet aggregation. It blocks the adhesion of platelet to immobilized collagen, but only exerts a slight inhibition to fibrinogen. In vivo, it exerts potent antithrombotic effect. This Calloselasma rhodostoma (Malayan pit viper) protein is Snake venom metalloproteinase kistomin.